The following is a 70-amino-acid chain: MADQIQEILDVPREFLKDGIQFIKKCQKPDRREFIKISQAVGTGFLIMGAVGYLVKLIHIPLNQVLVGGA.

Residues 1–39 lie on the Cytoplasmic side of the membrane; that stretch reads MADQIQEILDVPREFLKDGIQFIKKCQKPDRREFIKISQ. Residues 40 to 58 form a helical membrane-spanning segment; the sequence is AVGTGFLIMGAVGYLVKLI. Topologically, residues 59-70 are extracellular; the sequence is HIPLNQVLVGGA.

This sequence belongs to the SecE/SEC61-gamma family. Heterotrimeric complex composed of SEC61-alpha, SEC61-beta and SEC61-gamma.

It is found in the endoplasmic reticulum membrane. Its function is as follows. Necessary for protein translocation in the endoplasmic reticulum. In Neurospora crassa (strain ATCC 24698 / 74-OR23-1A / CBS 708.71 / DSM 1257 / FGSC 987), this protein is Probable protein transport protein Sec61 subunit gamma.